The chain runs to 205 residues: MANLKVMDQNGKDSGEVTLNDKVFGIEPNDNVVFEAIIRQRAGKRQGTSKVKNRSAVRGGGKKPWRQKGTGRARQGSIRAPQWRGGGTVFGPTPRSYAYTMPRKQRRLAIKSVLSQKLIDNDLIVLDKLTMSAPKTKELVSMLNSLNADGKVLIVSDDNNVQLSARNLAKVKVVPVNGLNVEDAVNYGKLILTQDAVKKIEEVLA.

A disordered region spans residues 43–97; the sequence is GKRQGTSKVKNRSAVRGGGKKPWRQKGTGRARQGSIRAPQWRGGGTVFGPTPRSY. Basic residues predominate over residues 51–71; it reads VKNRSAVRGGGKKPWRQKGTG.

This sequence belongs to the universal ribosomal protein uL4 family. In terms of assembly, part of the 50S ribosomal subunit.

Its function is as follows. One of the primary rRNA binding proteins, this protein initially binds near the 5'-end of the 23S rRNA. It is important during the early stages of 50S assembly. It makes multiple contacts with different domains of the 23S rRNA in the assembled 50S subunit and ribosome. Functionally, forms part of the polypeptide exit tunnel. The sequence is that of Large ribosomal subunit protein uL4 from Lactobacillus acidophilus (strain ATCC 700396 / NCK56 / N2 / NCFM).